The chain runs to 278 residues: Bifunctional protein FolD (278 aa).

Residues 162–164 (GAG) and Ile228 each bind NADP(+).

Belongs to the tetrahydrofolate dehydrogenase/cyclohydrolase family. As to quaternary structure, homodimer.

The enzyme catalyses (6R)-5,10-methylene-5,6,7,8-tetrahydrofolate + NADP(+) = (6R)-5,10-methenyltetrahydrofolate + NADPH. It catalyses the reaction (6R)-5,10-methenyltetrahydrofolate + H2O = (6R)-10-formyltetrahydrofolate + H(+). Its pathway is one-carbon metabolism; tetrahydrofolate interconversion. Catalyzes the oxidation of 5,10-methylenetetrahydrofolate to 5,10-methenyltetrahydrofolate and then the hydrolysis of 5,10-methenyltetrahydrofolate to 10-formyltetrahydrofolate. The chain is Bifunctional protein FolD from Hydrogenobaculum sp. (strain Y04AAS1).